We begin with the raw amino-acid sequence, 201 residues long: MPKEFKQHTGIAVPLDASNVDTDAIIPKQFLQKVTRIGFGQHLFHEWRFLDDEGKQPNPDFVLNYPRYQGASILLARENFGCGSSREHAPWALDDYGIRVIIAPSFADIFYGNSLNNQMLPIRLSDEEVEELFQFVNANEGATITVDLETQRVSANNKVYSFEIDPFRRHCLLNGLDNIGLTLQHEAKIAEYESNIPAFLR.

This sequence belongs to the LeuD family. LeuD type 1 subfamily. As to quaternary structure, heterodimer of LeuC and LeuD.

The enzyme catalyses (2R,3S)-3-isopropylmalate = (2S)-2-isopropylmalate. It participates in amino-acid biosynthesis; L-leucine biosynthesis; L-leucine from 3-methyl-2-oxobutanoate: step 2/4. Catalyzes the isomerization between 2-isopropylmalate and 3-isopropylmalate, via the formation of 2-isopropylmaleate. This Pasteurella multocida (strain Pm70) protein is 3-isopropylmalate dehydratase small subunit.